The sequence spans 369 residues: Uroporphyrinogen decarboxylase (369 aa).

A disordered region spans residues 1–26 (MPVLHVDARPGSGPGGVSPPPSGAAL). Residues 56–60 (RQAGR), Asp105, Tyr180, Ser235, and His348 contribute to the substrate site.

Belongs to the uroporphyrinogen decarboxylase family. Homodimer.

The protein resides in the cytoplasm. It catalyses the reaction uroporphyrinogen III + 4 H(+) = coproporphyrinogen III + 4 CO2. Its pathway is porphyrin-containing compound metabolism; protoporphyrin-IX biosynthesis; coproporphyrinogen-III from 5-aminolevulinate: step 4/4. Functionally, catalyzes the decarboxylation of four acetate groups of uroporphyrinogen-III to yield coproporphyrinogen-III. In Frankia casuarinae (strain DSM 45818 / CECT 9043 / HFP020203 / CcI3), this protein is Uroporphyrinogen decarboxylase.